A 147-amino-acid polypeptide reads, in one-letter code: Bis(5'-nucleosyl)-tetraphosphatase [asymmetrical] (147 aa).

Alanine 2 bears the N-acetylalanine mark. The 138-residue stretch at 2–139 (ALRACGLIIF…EMKATLQEGH (138 aa)) folds into the Nudix hydrolase domain. A Nudix box motif is present at residues 43–64 (GHVDPGENDLETALRETQEETG).

This sequence belongs to the Nudix hydrolase family. It depends on a divalent metal cation as a cofactor.

The enzyme catalyses P(1),P(4)-bis(5'-guanosyl) tetraphosphate + H2O = GMP + GTP + 2 H(+). It carries out the reaction a 5'-end CoA-ribonucleoside in mRNA + H2O = a 5'-end phospho-adenosine-phospho-ribonucleoside in mRNA + (R)-4'-phosphopantetheine + 2 H(+). It catalyses the reaction a 5'-end FAD-phospho-ribonucleoside in mRNA + H2O = a 5'-end phospho-adenosine-phospho-ribonucleoside in mRNA + FMN + 2 H(+). Catalyzes the asymmetric hydrolysis of diadenosine 5',5'''-P1,P4-tetraphosphate (Ap4A) to yield AMP and ATP. Exhibits decapping activity towards FAD-capped RNAs and dpCoA-capped RNAs in vitro. This chain is Bis(5'-nucleosyl)-tetraphosphatase [asymmetrical] (Nudt2), found in Rattus norvegicus (Rat).